A 360-amino-acid chain; its full sequence is sn-glycerol-3-phosphate import ATP-binding protein UgpC (360 aa).

The 232-residue stretch at 4–235 (LSLKGVRKSY…PATTFVASFI (232 aa)) folds into the ABC transporter domain. 37–44 (GPSGCGKS) serves as a coordination point for ATP.

This sequence belongs to the ABC transporter superfamily. sn-glycerol-3-phosphate importer (TC 3.A.1.1.3) family. The complex is composed of two ATP-binding proteins (UgpC), two transmembrane proteins (UgpA and UgpE) and a solute-binding protein (UgpB).

It localises to the cell inner membrane. The enzyme catalyses sn-glycerol 3-phosphate(out) + ATP + H2O = sn-glycerol 3-phosphate(in) + ADP + phosphate + H(+). Functionally, part of the ABC transporter complex UgpBAEC involved in sn-glycerol-3-phosphate (G3P) import. Responsible for energy coupling to the transport system. The sequence is that of sn-glycerol-3-phosphate import ATP-binding protein UgpC from Burkholderia pseudomallei (strain K96243).